The chain runs to 70 residues: MKKRSQVFCIFIAMVLLILPLSMSDVPEICKICGEECERFCFKRRFRFCCYDYGFMKSDDESPSLQIPNV.

The first 24 residues, 1–24 (MKKRSQVFCIFIAMVLLILPLSMS), serve as a signal peptide directing secretion.

The protein belongs to the scoloptoxin-20 family. Post-translationally, contains 3 disulfide bonds. In terms of tissue distribution, expressed by the venom gland.

The protein resides in the secreted. This Scolopendra morsitans (Tanzanian blue ringleg centipede) protein is U-scoloptoxin(20)-Sm1a.